Reading from the N-terminus, the 947-residue chain is Bifunctional glutamine synthetase adenylyltransferase/adenylyl-removing enzyme (947 aa).

Residues 1–440 form an adenylyl removase region; it reads MTPLSSPLSQ…VFNELIGDDE (440 aa). Positions 450–947 are adenylyl transferase; it reads SEPWREVWQD…ASWRKWLVAV (498 aa).

Belongs to the GlnE family. The cofactor is Mg(2+).

The enzyme catalyses [glutamine synthetase]-O(4)-(5'-adenylyl)-L-tyrosine + phosphate = [glutamine synthetase]-L-tyrosine + ADP. It carries out the reaction [glutamine synthetase]-L-tyrosine + ATP = [glutamine synthetase]-O(4)-(5'-adenylyl)-L-tyrosine + diphosphate. Its function is as follows. Involved in the regulation of glutamine synthetase GlnA, a key enzyme in the process to assimilate ammonia. When cellular nitrogen levels are high, the C-terminal adenylyl transferase (AT) inactivates GlnA by covalent transfer of an adenylyl group from ATP to specific tyrosine residue of GlnA, thus reducing its activity. Conversely, when nitrogen levels are low, the N-terminal adenylyl removase (AR) activates GlnA by removing the adenylyl group by phosphorolysis, increasing its activity. The regulatory region of GlnE binds the signal transduction protein PII (GlnB) which indicates the nitrogen status of the cell. The polypeptide is Bifunctional glutamine synthetase adenylyltransferase/adenylyl-removing enzyme (Salmonella paratyphi B (strain ATCC BAA-1250 / SPB7)).